Consider the following 344-residue polypeptide: Centromere protein N (344 aa).

This sequence belongs to the CENP-N/CHL4 family.

The protein localises to the nucleus. The protein resides in the chromosome. It is found in the centromere. Probable component of a centromeric complex involved in assembly of kinetochore proteins, mitotic progression and chromosome segregation. This chain is Centromere protein N (CENPN), found in Gallus gallus (Chicken).